A 763-amino-acid chain; its full sequence is Ethylene receptor 2 (763 aa).

The next 3 helical transmembrane spans lie at 58-78 (FLIAMAYFSIPLELLYFATCS), 86-106 (IVLQFGAFIVLCGLTHLITMF), and 115-135 (VVLALTVAKFLTALVSFATAI). Cu cation-binding residues include Cys-97 and His-101. The 150-residue stretch at 190-339 (DRHTILYTTM…VVADQVAVAL (150 aa)) folds into the GAF domain. The Histidine kinase domain maps to 382–615 (AMYDGMRRPM…TIMLALQFQL (234 aa)). A Response regulatory domain is found at 641–760 (QVILVDSDDT…ALGDELYRVL (120 aa)). Asp-692 carries the 4-aspartylphosphate modification.

The protein belongs to the ethylene receptor family. The cofactor is Cu cation. As to expression, expressed in anthers and hulls.

The protein localises to the endoplasmic reticulum membrane. It catalyses the reaction ATP + protein L-histidine = ADP + protein N-phospho-L-histidine.. In terms of biological role, ethylene receptor related to bacterial two-component regulators. Acts as a negative regulator of ethylene signaling. May delay the transition from the vegetative stage to the floral stage by up-regulating GI (GIGANTEA) and RCN1 and cause starch accumulation in stems by down-regulating the alpha-amylase AMY3D. This is Ethylene receptor 2 from Oryza sativa subsp. indica (Rice).